Here is a 488-residue protein sequence, read N- to C-terminus: UDP-glycosyltransferase 85A3 (488 aa).

Residues serine 306, 363–365 (CPQ), 380–388 (HCGWNSTLE), and 402–405 (FAEQ) contribute to the UDP-alpha-D-glucose site.

Belongs to the UDP-glycosyltransferase family. As to expression, expressed in roots and flowers.

The polypeptide is UDP-glycosyltransferase 85A3 (UGT85A3) (Arabidopsis thaliana (Mouse-ear cress)).